We begin with the raw amino-acid sequence, 339 residues long: Probable N5-carboxyaminoimidazole ribonucleotide mutase (339 aa).

3 residues coordinate substrate: Ser11, Asp14, and Arg41.

Belongs to the AIR carboxylase family. Class I subfamily.

It catalyses the reaction 5-carboxyamino-1-(5-phospho-D-ribosyl)imidazole + H(+) = 5-amino-1-(5-phospho-D-ribosyl)imidazole-4-carboxylate. It participates in purine metabolism; IMP biosynthesis via de novo pathway; 5-amino-1-(5-phospho-D-ribosyl)imidazole-4-carboxylate from 5-amino-1-(5-phospho-D-ribosyl)imidazole (N5-CAIR route): step 2/2. In terms of biological role, catalyzes the conversion of N5-carboxyaminoimidazole ribonucleotide (N5-CAIR) to 4-carboxy-5-aminoimidazole ribonucleotide (CAIR). This chain is Probable N5-carboxyaminoimidazole ribonucleotide mutase, found in Methanobrevibacter smithii.